The chain runs to 177 residues: Glutathione peroxidase homolog (177 aa).

Cys35 is a catalytic residue.

It belongs to the glutathione peroxidase family.

Its function is as follows. Important in the cellular metabolism or defense processes particular to this pathogen. This Neisseria meningitidis serogroup A / serotype 4A (strain DSM 15465 / Z2491) protein is Glutathione peroxidase homolog (gpxA).